Here is a 118-residue protein sequence, read N- to C-terminus: uncharacterized protein (118 aa).

This sequence to S.pombe tam6.

Its subcellular location is the mitochondrion. This is an uncharacterized protein from Saccharomyces cerevisiae (strain ATCC 204508 / S288c) (Baker's yeast).